Consider the following 215-residue polypeptide: C-type lectin domain family 4 member D (215 aa).

The Cytoplasmic segment spans residues 1–17; the sequence is MGLEKPQSKLEGGMHPQ. A helical; Signal-anchor for type II membrane protein membrane pass occupies residues 18 to 38; sequence LIPSVIAVVFILLLSVCFIAS. Residues 39–215 are Extracellular-facing; that stretch reads CLVTHHNFSR…ICKIPGTTLN (177 aa). An N-linked (GlcNAc...) asparagine glycan is attached at N45. A disulfide bridge links C84 with C95. A C-type lectin domain is found at 91 to 208; sequence FQSNCYFPLT…CNFEASRICK (118 aa). Residues N102 and N111 are each glycosylated (N-linked (GlcNAc...) asparagine). Cystine bridges form between C112-C207 and C182-C199. Positions 173, 175, 195, and 196 each coordinate Ca(2+).

In terms of assembly, heterodimer with CLEC4E; disulfide-linked. CLEC4E acts as a bridge for interaction between CLEC4D and FCER1G to form a functional complex. Heterodimer with CLEC6A; this heterodimer forms a pattern recognition receptor (PRR) against fungal infection. In terms of tissue distribution, expressed weakly in peripheral blood leukocytes, bone marrow and spleen. Expression is confined mostly in monocytes and macrophage and seems to be up-regulated by IL-6, IL-10, TNF-alpha and IFN-gamma.

Its subcellular location is the cell membrane. In terms of biological role, calcium-dependent lectin that acts as a pattern recognition receptor (PRR) of the innate immune system: recognizes damage-associated molecular patterns (DAMPs) of pathogen-associated molecular patterns (PAMPs) of bacteria and fungi. The PAMPs include alpha-mannans on C.albicans hypheas and mycobacterial trehalose 6,6'-dimycolate (TDM). Interacts with signaling adapter Fc receptor gamma chain/FCER1G, likely via CLEC4E, to form a functional complex in myeloid cells. Binding of mycobacterial TDM or C.albicans alpha-mannans to this receptor complex leads to phosphorylation of the immunoreceptor tyrosine-based activation motif (ITAM) of FCER1G, triggering activation of SYK, CARD9 and NF-kappa-B, consequently driving maturation of antigen-presenting cells and shaping antigen-specific priming of T-cells toward effector T-helper 1 and T-helper 17 cell subtypes. The heterodimer formed with CLEC6A is active against fungal infection. Functions as an endocytic receptor. May be involved in antigen uptake at the site of infection, either for clearance of the antigen, or for processing and further presentation to T-cells. The polypeptide is C-type lectin domain family 4 member D (Homo sapiens (Human)).